The sequence spans 217 residues: Cytochrome c biogenesis ATP-binding export protein CcmA (217 aa).

An ABC transporter domain is found at 16–214 (LVLEQLSCER…AHGQAEVTEG (199 aa)). 48 to 55 (GANGAGKT) contacts ATP.

This sequence belongs to the ABC transporter superfamily. CcmA exporter (TC 3.A.1.107) family. The complex is composed of two ATP-binding proteins (CcmA) and two transmembrane proteins (CcmB).

The protein localises to the cell inner membrane. It catalyses the reaction heme b(in) + ATP + H2O = heme b(out) + ADP + phosphate + H(+). In terms of biological role, part of the ABC transporter complex CcmAB involved in the biogenesis of c-type cytochromes; once thought to export heme, this seems not to be the case, but its exact role is uncertain. Responsible for energy coupling to the transport system. This is Cytochrome c biogenesis ATP-binding export protein CcmA from Alcanivorax borkumensis (strain ATCC 700651 / DSM 11573 / NCIMB 13689 / SK2).